The primary structure comprises 375 residues: Succinyl-diaminopimelate desuccinylase (375 aa).

His-75 serves as a coordination point for Zn(2+). Asp-77 is an active-site residue. Asp-106 serves as a coordination point for Zn(2+). The Proton acceptor role is filled by Glu-136. Zn(2+) is bound by residues Glu-137, Glu-165, and His-348.

The protein belongs to the peptidase M20A family. DapE subfamily. Homodimer. It depends on Zn(2+) as a cofactor. The cofactor is Co(2+).

The enzyme catalyses N-succinyl-(2S,6S)-2,6-diaminopimelate + H2O = (2S,6S)-2,6-diaminopimelate + succinate. It participates in amino-acid biosynthesis; L-lysine biosynthesis via DAP pathway; LL-2,6-diaminopimelate from (S)-tetrahydrodipicolinate (succinylase route): step 3/3. Its function is as follows. Catalyzes the hydrolysis of N-succinyl-L,L-diaminopimelic acid (SDAP), forming succinate and LL-2,6-diaminopimelate (DAP), an intermediate involved in the bacterial biosynthesis of lysine and meso-diaminopimelic acid, an essential component of bacterial cell walls. The polypeptide is Succinyl-diaminopimelate desuccinylase (Novosphingobium aromaticivorans (strain ATCC 700278 / DSM 12444 / CCUG 56034 / CIP 105152 / NBRC 16084 / F199)).